Reading from the N-terminus, the 352-residue chain is Sphingosine 1-phosphate receptor 2 (352 aa).

At 1-34 the chain is on the extracellular side; sequence MGGLYSEYLNPEKVQEHYNYTKETLDMQETPSRK. N-linked (GlcNAc...) asparagine glycosylation occurs at Asn-19. The chain crosses the membrane as a helical span at residues 35–59; sequence VASAFIIILCCAIVVENLLVLIAVA. Residues 60–66 are Cytoplasmic-facing; that stretch reads RNSKFHS. A helical membrane pass occupies residues 67-95; that stretch reads AMYLFLGNLAASDLLAGVAFVANTLLSGP. At 96 to 109 the chain is on the extracellular side; that stretch reads VTLSLTPLQWFARE. A helical transmembrane segment spans residues 110–128; that stretch reads GSAFITLSASVFSLLAIAI. At 129–147 the chain is on the cytoplasmic side; that stretch reads ERQVAIAKVKLYGSDKSCR. A helical transmembrane segment spans residues 148–173; that stretch reads MLMLIGASWLISLILGGLPILGWNCL. Residues 174–189 are Extracellular-facing; that stretch reads DHLEACSTVLPLYAKH. Residues 190 to 210 traverse the membrane as a helical segment; sequence YVLCVVTIFSVILLAIVALYV. Residues 211–233 lie on the Cytoplasmic side of the membrane; the sequence is RIYFVVRSSHADVAGPQTLALLK. A helical transmembrane segment spans residues 234 to 255; it reads TVTIVLGVFIICWLPAFSILLL. Residues 256–271 lie on the Extracellular side of the membrane; that stretch reads DSTCPVRACPVLYKAH. A helical transmembrane segment spans residues 272–292; it reads YFFAFATLNSLLNPVIYTWRS. Over 293–352 the chain is Cytoplasmic; sequence RDLRREVLRPLLCWRQGKGATGRRGGNPGHRLLPLRSSSSLERGLHMPTSPTFLEGNTVV. Cys-305 is lipidated: S-palmitoyl cysteine.

This sequence belongs to the G-protein coupled receptor 1 family. Expressed in all developing tissues with highest levels detected in primitive, transformed cells. Relative abundance: lung &gt; kidney = skin = gut &gt; spleen &gt; brain &gt; liver.

Its subcellular location is the cell membrane. Its function is as follows. Receptor for the lysosphingolipid sphingosine 1-phosphate (S1P). S1P is a bioactive lysophospholipid that elicits diverse physiological effects on most types of cells and tissues. Receptor for the chemokine-like protein FAM19A5. Mediates the inhibitory effect of FAM19A5 on vascular smooth muscle cell proliferation and migration. In lymphoid follicles, couples the binding of S1P to the activation of GNA13 and downstream inhibition of AKT activation leading to suppression of germinal center (GC) B cell growth and migration outside the GC niche. In Rattus norvegicus (Rat), this protein is Sphingosine 1-phosphate receptor 2 (S1pr2).